Here is a 135-residue protein sequence, read N- to C-terminus: Large ribosomal subunit protein uL16m (135 aa).

It belongs to the universal ribosomal protein uL16 family.

It localises to the mitochondrion. This chain is Large ribosomal subunit protein uL16m (RPL16), found in Prototheca wickerhamii.